A 194-amino-acid chain; its full sequence is Accessory gene regulator protein B (194 aa).

5 helical membrane-spanning segments follow: residues 44–64 (IVVY…LTHL), 80–100 (SSLL…YLII), 107–127 (FVLL…APAA), 142–162 (KILS…TKEP), and 163–183 (VNKL…PIFF).

It belongs to the AgrB family.

It localises to the cell membrane. Its function is as follows. Essential for the production of a quorum sensing system signal molecule, the autoinducing peptide (AIP). This quorum sensing system is responsible for the regulation of the expression of virulence factor genes. Involved in the proteolytic processing of AgrD, the precursor of AIP. The polypeptide is Accessory gene regulator protein B (Staphylococcus epidermidis).